The following is a 492-amino-acid chain: Probable cobyric acid synthase (492 aa).

The 193-residue stretch at 252–444 (PIEVNIVKFS…FHGILENFEF (193 aa)) folds into the GATase cobBQ-type domain. Catalysis depends on Cys-330, which acts as the Nucleophile. The active site involves His-436.

This sequence belongs to the CobB/CobQ family. CobQ subfamily.

Its pathway is cofactor biosynthesis; adenosylcobalamin biosynthesis. In terms of biological role, catalyzes amidations at positions B, D, E, and G on adenosylcobyrinic A,C-diamide. NH(2) groups are provided by glutamine, and one molecule of ATP is hydrogenolyzed for each amidation. The polypeptide is Probable cobyric acid synthase (Methanococcus maripaludis (strain C5 / ATCC BAA-1333)).